We begin with the raw amino-acid sequence, 415 residues long: Diaminopimelate decarboxylase (415 aa).

Lys-60 bears the N6-(pyridoxal phosphate)lysine mark. Pyridoxal 5'-phosphate contacts are provided by residues Gly-239 and 273–276; that span reads EPGR. Substrate contacts are provided by Arg-276, Arg-312, and Tyr-316. The Proton donor role is filled by Cys-342. Residues Glu-343 and Tyr-370 each contribute to the substrate site. Tyr-370 contributes to the pyridoxal 5'-phosphate binding site.

This sequence belongs to the Orn/Lys/Arg decarboxylase class-II family. LysA subfamily. As to quaternary structure, homodimer. Pyridoxal 5'-phosphate is required as a cofactor.

It catalyses the reaction meso-2,6-diaminopimelate + H(+) = L-lysine + CO2. It participates in amino-acid biosynthesis; L-lysine biosynthesis via DAP pathway; L-lysine from DL-2,6-diaminopimelate: step 1/1. Specifically catalyzes the decarboxylation of meso-diaminopimelate (meso-DAP) to L-lysine. The sequence is that of Diaminopimelate decarboxylase from Pseudomonas aeruginosa (strain ATCC 15692 / DSM 22644 / CIP 104116 / JCM 14847 / LMG 12228 / 1C / PRS 101 / PAO1).